A 126-amino-acid chain; its full sequence is MLITVLNVALGGAIGASCRYLIGVGVLRALGPTGFPVGVLGVNILGSALMGAFVVLAAHKGLTHLSPFVMTGVLGGFTTFSAFSLEAVTLFERGAYGQAALYIGLSAGLSIAALALGMMAARGVLT.

Transmembrane regions (helical) follow at residues 2–22 (LITV…RYLI), 37–57 (VGVL…VVLA), 65–85 (LSPF…AFSL), and 99–119 (AALY…LGMM). G75 and T78 together coordinate Na(+).

It belongs to the fluoride channel Fluc/FEX (TC 1.A.43) family.

It is found in the cell inner membrane. It carries out the reaction fluoride(in) = fluoride(out). With respect to regulation, na(+) is not transported, but it plays an essential structural role and its presence is essential for fluoride channel function. Fluoride-specific ion channel. Important for reducing fluoride concentration in the cell, thus reducing its toxicity. The sequence is that of Fluoride-specific ion channel FluC from Ruegeria sp. (strain TM1040) (Silicibacter sp.).